A 448-amino-acid chain; its full sequence is Fibulin-5 (448 aa).

Positions 1 to 23 (MPGIKRILTVTILALCLPSPGNA) are cleaved as a signal peptide. The EGF-like 1; calcium-binding domain occupies 42 to 82 (DIDECRTIPEACRGDMMCVNQNGRYLCIPRTNPVYRGPYSN). 17 cysteine pairs are disulfide-bonded: Cys46/Cys59, Cys53/Cys68, Cys131/Cys144, Cys138/Cys153, Cys155/Cys166, Cys172/Cys181, Cys177/Cys190, Cys192/Cys205, Cys211/Cys221, Cys217/Cys230, Cys232/Cys245, Cys251/Cys262, Cys258/Cys271, Cys273/Cys286, Cys292/Cys305, Cys299/Cys314, and Cys320/Cys332. The short motif at 54–56 (RGD) is the Cell attachment site element. The 41-residue stretch at 127 to 167 (DVDECATDSHQCNPTQICINTEGGYTCSCTDGYWLLEGQCL) folds into the EGF-like 2; calcium-binding domain. Residues 168 to 206 (DIDECRYGYCQQLCANVPGSYSCTCNPGFTLNEDGRSCQ) form the EGF-like 3; calcium-binding domain. The region spanning 207 to 246 (DVNECATENPCVQTCVNTYGSFICRCDPGYELEEDGVHCS) is the EGF-like 4; calcium-binding domain. Residues 245-448 (CSDMDECSFS…LRIYVSQYPF (204 aa)) are interaction with LOXL1. The EGF-like 5; calcium-binding domain maps to 247–287 (DMDECSFSEFLCQHECVNQPGTYFCSCPPGYILLDDNRSCQ). Asn283 and Asn296 each carry an N-linked (GlcNAc...) asparagine glycan. In terms of domain architecture, EGF-like 6; calcium-binding spans 288–333 (DINECEHRNHTCNLQQTCYNLQGGFKCIDPIRCEEPYLRISDNRCM).

The protein belongs to the fibulin family. In terms of assembly, homodimer. Monomer, homodimerizes in presence of Ca(2+). Interacts with ELN. Interacts (via N-terminus) with the integrins ITGAV/ITGB3, ITGAV/ITGB5 and ITGA9/ITGB1. Interacts with FBN1 (via N-terminal domain). Forms a ternary complex with ELN and FBN1. Interacts with EFEMP2 with moderate affinity. Interacts with LOXL1. Post-translationally, N-glycosylated.

It localises to the secreted. Its subcellular location is the extracellular space. The protein resides in the extracellular matrix. Essential for elastic fiber formation, is involved in the assembly of continuous elastin (ELN) polymer and promotes the interaction of microfibrils and ELN. Stabilizes and organizes elastic fibers in the skin, lung and vasculature. Promotes adhesion of endothelial cells through interaction of integrins and the RGD motif. Vascular ligand for integrin receptors which may play a role in vascular development and remodeling. May act as an adapter that mediates the interaction between FBN1 and ELN. This chain is Fibulin-5 (FBLN5), found in Pongo abelii (Sumatran orangutan).